The sequence spans 257 residues: Probable enoyl-CoA hydratase echA17 (257 aa).

It belongs to the enoyl-CoA hydratase/isomerase family.

The catalysed reaction is a (3S)-3-hydroxyacyl-CoA = a (2E)-enoyl-CoA + H2O. The enzyme catalyses a 4-saturated-(3S)-3-hydroxyacyl-CoA = a (3E)-enoyl-CoA + H2O. Could possibly oxidize fatty acids using specific components. The protein is Probable enoyl-CoA hydratase echA17 (echA17) of Mycobacterium avium (strain 104).